Reading from the N-terminus, the 82-residue chain is uncharacterized protein (82 aa).

Helical transmembrane passes span 22-39 and 46-65; these read WASD…MFIA and LKMG…TWVI.

It localises to the cell membrane. This is an uncharacterized protein from Bacillus subtilis (strain 168).